We begin with the raw amino-acid sequence, 198 residues long: Dynactin subunit 5 (198 aa).

A compositionally biased stretch (polar residues) spans 179–188 (NTPASKGLPS). A disordered region spans residues 179-198 (NTPASKGLPSTPTKLQTTTT). A compositionally biased stretch (low complexity) spans 189–198 (TPTKLQTTTT).

Belongs to the dynactin subunits 5/6 family. Dynactin subunit 5 subfamily. In terms of assembly, member of the pointed-end complex of the dynactin shoulder complex.

The protein resides in the cytoplasm. It localises to the cytoskeleton. This Dictyostelium discoideum (Social amoeba) protein is Dynactin subunit 5 (dynE).